The chain runs to 243 residues: Segregation and condensation protein A (243 aa).

This sequence belongs to the ScpA family. As to quaternary structure, component of a cohesin-like complex composed of ScpA, ScpB and the Smc homodimer, in which ScpA and ScpB bind to the head domain of Smc. The presence of the three proteins is required for the association of the complex with DNA.

Its subcellular location is the cytoplasm. In terms of biological role, participates in chromosomal partition during cell division. May act via the formation of a condensin-like complex containing Smc and ScpB that pull DNA away from mid-cell into both cell halves. This chain is Segregation and condensation protein A, found in Staphylococcus epidermidis (strain ATCC 35984 / DSM 28319 / BCRC 17069 / CCUG 31568 / BM 3577 / RP62A).